A 554-amino-acid chain; its full sequence is Transcription factor 7-like 1-A (554 aa).

Positions 1–11 (MPQLNSGGGDE) are enriched in gly residues. The segment at 1-61 (MPQLNSGGGD…SENHSSDSDS (61 aa)) is interaction with CTNNB1-A. Disordered regions lie at residues 1 to 73 (MPQL…REAF), 183 to 213 (GTPP…PYYP), and 391 to 475 (WSAR…LTTK). Basic and acidic residues-rich tracts occupy residues 17–32 (ELIR…EKSP) and 52–73 (SENH…REAF). Residues 109-312 (LGGHYLPNGA…SPNLHTKSNM (204 aa)) are interaction with AES and TLE4-A. Positions 324–392 (IKKPLNAFML…LHSQLYPSWS (69 aa)) form a DNA-binding region, HMG box. The segment covering 407–416 (KQSPEMETHT) has biased composition (basic and acidic residues). The tract at residues 408-554 (QSPEMETHTK…PLSLVTKSSD (147 aa)) is interaction with CTBP-B. Over residues 445 to 464 (SPATPSAALASPAAPAATHS) the composition is skewed to low complexity. Positions 465 to 474 (EQAQPLSLTT) are enriched in polar residues.

The protein belongs to the TCF/LEF family. Interacts with csnk1e, ctnnb1-A, ctbp-B, dact1-A and gsk3b. May interact with ase and tle4-A. Phosphorylated. Phosphorylation by csnk1e promotes binding to ctnnb1-A while phosphorylation by gsk3b may reverse this effect.

It is found in the cytoplasm. It localises to the nucleus. Participates in the Wnt signaling pathway. Binds to DNA and acts as a repressor in the absence of ctnnb1-A and possibly ctnnb1-B, and as an activator in the presence of these proteins. Required early in development for the establishment of the dorsal body axis in response to maternal Wnt signaling. Also required during development of the CNS for the establishment of dorsal-ventral patterning in the prospective diencephalon. The sequence is that of Transcription factor 7-like 1-A (tcf7l1-a) from Xenopus laevis (African clawed frog).